A 263-amino-acid polypeptide reads, in one-letter code: 22 kDa alpha-zein 16 (263 aa).

An N-terminal signal peptide occupies residues 1 to 21 (MATKILALLALLALLVSATNA).

Belongs to the zein family. In terms of tissue distribution, expressed in developing endosperm.

In terms of biological role, zeins are major seed storage proteins. The sequence is that of 22 kDa alpha-zein 16 from Zea mays (Maize).